The sequence spans 631 residues: MNSSDEEKQLQLITSLKEQAIGEYEDLRAENQKTKEKCDKIRQERDEAVKKLEEFQKISHMVIEEVNFMQNHLEIEKTCRESAEALATKLNKENKTLKRISMLYMAKLGPDVITEEINIDDDDPATDTDAAAETCVSVQCQKQIKELRDQIVSVQEEKKVLAIELENLKSKLGEVMEEVNKVKQEKAVLNSEVLEQRKVLEKCNRVSMLAVEEYEELQVNLELEKDLRKKAESFAQEMFIEQNKLKRQSHLLLQSSLPDQQLLKALDENAKLIQQLEEERIQHQKKVKELEERLENEALHKEIHNLRQQLELLEDDKRELEQKYQSSEEKARNLKHSVDELQKRVNQSENSVPPPPPPPPPLPPPPPNPIRSLMSMIRKRSHPSGNSAKKEKTTQPETAEEVTDLKRQAVEEMMDRIKKGVHLRPVNQTARPKAKPDSLKGSESAVDELKGILGTLNKSTSSRSLKSLGPENSETELERILRRRKLTAEADSSSPTGILATSESKSMPVLGSVSSVTKSALNKKTLEAEFNNPCPLTPEPGEGPRKLEGCTNPKVTFQPPSKGGYRRKCVGSENQAEPVVVLDPVSTHEPQTKDQAAEKDPTQFEEEGGETQPEYKEDSGGKTGETDSSNC.

Methionine 1 is modified (N-acetylmethionine). Serine 3 and serine 4 each carry phosphoserine. Residues 7–353 are a coiled coil; sequence EKQLQLITSL…RVNQSENSVP (347 aa). Serine 101 is subject to Phosphoserine; by PAK1. Serine 249 is modified (phosphoserine). Disordered stretches follow at residues 343-404 and 417-508; these read KRVN…EVTD and IKKG…KSMP. Residues 352–369 are compositionally biased toward pro residues; that stretch reads VPPPPPPPPPLPPPPPNP. Serine 375 is modified (phosphoserine). The segment covering 456–465 has biased composition (polar residues); it reads LNKSTSSRSL. Position 473 is a phosphoserine (serine 473). The residue at position 487 (threonine 487) is a Phosphothreonine. Residues 490–505 are compositionally biased toward polar residues; the sequence is ADSSSPTGILATSESK. The residue at position 494 (serine 494) is a Phosphoserine. Threonine 496 bears the Phosphothreonine mark. Serine 506 and serine 515 each carry phosphoserine. The tract at residues 530–631 is disordered; it reads FNNPCPLTPE…KTGETDSSNC (102 aa). Threonine 537 bears the Phosphothreonine mark. The segment covering 590–602 has biased composition (basic and acidic residues); sequence PQTKDQAAEKDPT.

It belongs to the shootin family. In terms of assembly, interacts with L1CAM; this interaction occurs at axonal growth cones. Interacts with actin filament retrograde flow; this interaction is enhanced in a netrin-1- and PAK1-dependent manner and promotes F-actin-substrate coupling and concomitant formation of traction forces at axonal growth cones. Interacts with RUFY3. Interacts with PFN2. Interacts (via N-terminus) with KIF20B; this interaction is direct and promotes the association of SHTN1 to microtubules in primary neurons. Associates with microtubule. Phosphorylated on Ser-101 and Ser-249 by PAK1 through a CDC42- and RAC1-dependent signaling pathway, which enhances its association with F-actin retrograde flow in filopodia and lamellipodia of axonal growth cones. Phosphorylation on Ser-101 and Ser-249 is increased by netrin-1. As to expression, expressed in hippocampal neurons.

The protein localises to the perikaryon. Its subcellular location is the cell projection. It localises to the axon. It is found in the growth cone. The protein resides in the cytoplasm. The protein localises to the cytoskeleton. Its subcellular location is the filopodium. It localises to the lamellipodium. Functionally, involved in the generation of internal asymmetric signals required for neuronal polarization and neurite outgrowth. Mediates netrin-1-induced F-actin-substrate coupling or 'clutch engagement' within the axon growth cone through activation of CDC42, RAC1 and PAK1-dependent signaling pathway, thereby converting the F-actin retrograde flow into traction forces, concomitantly with filopodium extension and axon outgrowth. Plays a role in cytoskeletal organization by regulating the subcellular localization of phosphoinositide 3-kinase (PI3K) activity at the axonal growth cone. Also plays a role in regenerative neurite outgrowth. In the developing cortex, cooperates with KIF20B to promote both the transition from the multipolar to the bipolar stage and the radial migration of cortical neurons from the ventricular zone toward the superficial layer of the neocortex. Involved in the accumulation of phosphatidylinositol 3,4,5-trisphosphate (PIP3) in the growth cone of primary hippocampal neurons. The chain is Shootin-1 from Mus musculus (Mouse).